A 251-amino-acid polypeptide reads, in one-letter code: Ubiquinone/menaquinone biosynthesis C-methyltransferase UbiE (251 aa).

S-adenosyl-L-methionine is bound by residues Thr-74, Asp-95, and 123–124; that span reads NA.

This sequence belongs to the class I-like SAM-binding methyltransferase superfamily. MenG/UbiE family.

The enzyme catalyses a 2-demethylmenaquinol + S-adenosyl-L-methionine = a menaquinol + S-adenosyl-L-homocysteine + H(+). The catalysed reaction is a 2-methoxy-6-(all-trans-polyprenyl)benzene-1,4-diol + S-adenosyl-L-methionine = a 5-methoxy-2-methyl-3-(all-trans-polyprenyl)benzene-1,4-diol + S-adenosyl-L-homocysteine + H(+). The protein operates within quinol/quinone metabolism; menaquinone biosynthesis; menaquinol from 1,4-dihydroxy-2-naphthoate: step 2/2. It participates in cofactor biosynthesis; ubiquinone biosynthesis. Its function is as follows. Methyltransferase required for the conversion of demethylmenaquinol (DMKH2) to menaquinol (MKH2) and the conversion of 2-polyprenyl-6-methoxy-1,4-benzoquinol (DDMQH2) to 2-polyprenyl-3-methyl-6-methoxy-1,4-benzoquinol (DMQH2). The chain is Ubiquinone/menaquinone biosynthesis C-methyltransferase UbiE from Shewanella baltica (strain OS223).